Reading from the N-terminus, the 333-residue chain is MSNEVINVLITGAAGQIAYSLIFNVCKGDMFGLDQRIKLHLLDIPQMVDSLKGIVMEIQDGAYPLIADTVITADVKEAFTGVHYAILVGAMPRREGMERADLLKANAAIFKVQGKALAEHANKNVKVLVVGNPANTNALIAQVSANGIPKENFTCLTRLDQNRAKSQIALKAGVNVKDVHNVIIWGNHSSTQYPDYRCGYINLSTGKTPISTAIKDEKWLQGEFISTVQKRGAAVIAARKLSSAASAAKAITDHMHDWVLGTAEGEYVSMGVYSDGSYGVPEGLIFSFPVKCANGKYTIVQGLQMDDLSKNLINLTTEELVAEKTTALQFLSE.

12–18 (GAAGQIA) contacts NAD(+). Substrate-binding residues include Arg93 and Arg99. NAD(+) contacts are provided by residues Asn106, Gln113, and 130 to 132 (VGN). Positions 132 and 163 each coordinate substrate. His188 acts as the Proton acceptor in catalysis.

It belongs to the LDH/MDH superfamily. MDH type 2 family. In terms of assembly, homodimer.

It carries out the reaction (S)-malate + NAD(+) = oxaloacetate + NADH + H(+). Functionally, catalyzes the reversible oxidation of malate to oxaloacetate. The chain is Probable malate dehydrogenase 3 (mdhC) from Dictyostelium discoideum (Social amoeba).